The following is a 715-amino-acid chain: Interferon-induced GTP-binding protein Mx2 (715 aa).

Positions 1-14 (MSKAHKSWPHRRRN) are enriched in basic residues. 2 disordered regions span residues 1–24 (MSKAHKSWPHRRRNQFSSQRSLKK) and 69–88 (NNQPLPGNTSQPRAKGPENN). A compositionally biased stretch (polar residues) spans 69 to 80 (NNQPLPGNTSQP). Positions 115–387 (DLALPAIAVI…LITHIQKSLP (273 aa)) constitute a Dynamin-type G domain. The tract at residues 125 to 132 (GDQSSGKS) is G1 motif. 125–132 (GDQSSGKS) serves as a coordination point for GTP. The segment at 150 to 152 (VTR) is G2 motif. The interval 225 to 228 (DLPG) is G3 motif. GTP is bound by residues 225-229 (DLPGI) and 294-297 (TKPD). A G4 motif region spans residues 294-297 (TKPD). Positions 326–329 (KCRG) are G5 motif. In terms of domain architecture, GED spans 623–714 (FNEIGVHLNA…ALCQFSSKEI (92 aa)).

The protein belongs to the TRAFAC class dynamin-like GTPase superfamily. Dynamin/Fzo/YdjA family.

It localises to the cytoplasm. The protein localises to the nucleus. In terms of biological role, interferon-induced dynamin-like GTPase with antiviral activity. This chain is Interferon-induced GTP-binding protein Mx2 (MX2), found in Macaca mulatta (Rhesus macaque).